Reading from the N-terminus, the 287-residue chain is Protein PXR1 (287 aa).

The 48-residue stretch at 25–72 (TSRFGHLQLEKFGWKPGMGLGMSPTSSHKTHIKVSIKDDNLGLGAKIK) folds into the G-patch domain. Positions 143-155 (LKSYSNDKKRSRD) are enriched in basic and acidic residues. Positions 143 to 254 (LKSYSNDKKR…TTASNIPSTV (112 aa)) are disordered. Positions 163 to 190 (SKNKSKKQKKDKKDKKDKKDKKDKKDKK) are enriched in basic residues. A compositionally biased stretch (basic and acidic residues) spans 191–200 (DKKDKTEKKE). A compositionally biased stretch (basic residues) spans 201–220 (KKEKKEKKEKKEKKDKKDKK). Basic and acidic residues predominate over residues 221–230 (DKKDKIDKKD). Polar residues predominate over residues 239–251 (NNIEVSTTASNIP).

The protein belongs to the PINX1 family.

It is found in the nucleus. Its subcellular location is the nucleolus. Functionally, involved in rRNA-processing at A0, A1 and A2 sites and negatively regulates telomerase. This is Protein PXR1 (PXR1) from Vanderwaltozyma polyspora (strain ATCC 22028 / DSM 70294 / BCRC 21397 / CBS 2163 / NBRC 10782 / NRRL Y-8283 / UCD 57-17) (Kluyveromyces polysporus).